A 473-amino-acid chain; its full sequence is Aspartyl/glutamyl-tRNA(Asn/Gln) amidotransferase subunit B (473 aa).

This sequence belongs to the GatB/GatE family. GatB subfamily. As to quaternary structure, heterotrimer of A, B and C subunits.

It catalyses the reaction L-glutamyl-tRNA(Gln) + L-glutamine + ATP + H2O = L-glutaminyl-tRNA(Gln) + L-glutamate + ADP + phosphate + H(+). The enzyme catalyses L-aspartyl-tRNA(Asn) + L-glutamine + ATP + H2O = L-asparaginyl-tRNA(Asn) + L-glutamate + ADP + phosphate + 2 H(+). In terms of biological role, allows the formation of correctly charged Asn-tRNA(Asn) or Gln-tRNA(Gln) through the transamidation of misacylated Asp-tRNA(Asn) or Glu-tRNA(Gln) in organisms which lack either or both of asparaginyl-tRNA or glutaminyl-tRNA synthetases. The reaction takes place in the presence of glutamine and ATP through an activated phospho-Asp-tRNA(Asn) or phospho-Glu-tRNA(Gln). This is Aspartyl/glutamyl-tRNA(Asn/Gln) amidotransferase subunit B from Wolbachia pipientis subsp. Culex pipiens (strain wPip).